The chain runs to 64 residues: MMSTSYYQHIGYQDISVSKYKYICDPKDKVILNSVSWEEYKVKNNINRINDYINPHYPIHKLLE.

This is an uncharacterized protein from Dictyostelium discoideum (Social amoeba).